The following is a 72-amino-acid chain: Cytochrome c oxidase subunit 8C, mitochondrial (72 aa).

A mitochondrion-targeting transit peptide spans 1–29 (MSRLLLLCSSLLRHRAVLFSKPGHPGRLS). Topologically, residues 30–40 (HSESPQKKILS) are mitochondrial matrix. A helical transmembrane segment spans residues 41–64 (PTESAVGIVVFFTTFYIPAAYVLS). At 65–72 (SLKYFKGE) the chain is on the mitochondrial intermembrane side.

Belongs to the cytochrome c oxidase VIII family. Component of the cytochrome c oxidase (complex IV, CIV), a multisubunit enzyme composed of 14 subunits. The complex is composed of a catalytic core of 3 subunits MT-CO1, MT-CO2 and MT-CO3, encoded in the mitochondrial DNA, and 11 supernumerary subunits COX4I, COX5A, COX5B, COX6A, COX6B, COX6C, COX7A, COX7B, COX7C, COX8 and NDUFA4, which are encoded in the nuclear genome. The complex exists as a monomer or a dimer and forms supercomplexes (SCs) in the inner mitochondrial membrane with NADH-ubiquinone oxidoreductase (complex I, CI) and ubiquinol-cytochrome c oxidoreductase (cytochrome b-c1 complex, complex III, CIII), resulting in different assemblies (supercomplex SCI(1)III(2)IV(1) and megacomplex MCI(2)III(2)IV(2)).

The protein resides in the mitochondrion inner membrane. It participates in energy metabolism; oxidative phosphorylation. Its function is as follows. Component of the cytochrome c oxidase, the last enzyme in the mitochondrial electron transport chain which drives oxidative phosphorylation. The respiratory chain contains 3 multisubunit complexes succinate dehydrogenase (complex II, CII), ubiquinol-cytochrome c oxidoreductase (cytochrome b-c1 complex, complex III, CIII) and cytochrome c oxidase (complex IV, CIV), that cooperate to transfer electrons derived from NADH and succinate to molecular oxygen, creating an electrochemical gradient over the inner membrane that drives transmembrane transport and the ATP synthase. Cytochrome c oxidase is the component of the respiratory chain that catalyzes the reduction of oxygen to water. Electrons originating from reduced cytochrome c in the intermembrane space (IMS) are transferred via the dinuclear copper A center (CU(A)) of subunit 2 and heme A of subunit 1 to the active site in subunit 1, a binuclear center (BNC) formed by heme A3 and copper B (CU(B)). The BNC reduces molecular oxygen to 2 water molecules using 4 electrons from cytochrome c in the IMS and 4 protons from the mitochondrial matrix. In Mus musculus (Mouse), this protein is Cytochrome c oxidase subunit 8C, mitochondrial (Cox8c).